The sequence spans 388 residues: MRKSQKLAFRKGQFRITDITGVSLRGEIIKQIIKPTIHAVFDVAVEEMDHDVDDIEILFITREEEEERRREDPDLYRLDAWDREVLKKTSMDEHNYKSPINCIYEYDYDVLQPVANFEEFFEIDFDHVPLWKVDIYGDFAFYGSDPYIKETKEYPEEYISDEKRSEVELDYLLYNSTKLEQHRQYIIKNKEHFTDVKPQILETGERAEHLLMKRFYYNKIDNVIERKQEIEEDPIYTYIKFDFGAKLDLRIARLYYLNFTRMERMDLENQQKLYEFEKAALKGIAFDNFMILFGVFLIWATHPYLYKKIPWRIRYFFEFHRDEVIEYILMIPQIPKITWEEIKAYWTGQVMFTVIPTFQYAWSFLGKKIDLETIQAWKILAKTLNDIY.

It is found in the mitochondrion. This is an uncharacterized protein from Dictyostelium citrinum (Slime mold).